A 428-amino-acid polypeptide reads, in one-letter code: MKIYKLQTPVNTILENIAADKSISHRFAIFSLLTQGENKARNYLLAQDTLNTLEIIKNLGAKIEQKDSCVKIIPPKEILSPNCILDCGNSGTAMRLMIGFLAGISGFFVLSGDKFLNNRPMRRISKPLTQIGARIYGRNEANLAPLCIEGQNLKAFNYKSEISSAQVKTAMILSAFRADNICTFSEISLSRNHSENMLKAMKAPMRVSNDGLNLEISPLKKPLKAQNIIIPNDPSSAFYFALAAIILPKSQIILKNILLNPTRIEAYKILQKMGAKLEMTITQNDFETIGEIRVESSKLNGIEVKDNIAWLIDEAPALAIAFALAKGKSNLVNAKELRVKESDRIAVMVENLKLCGVEAKEFDDGFEIEGGCELKSSKIKSYGDHRIAMSFAILGLLCGIEIDDSDCIKTSFPNFIEILSNLGARIDY.

The 3-phosphoshikimate site is built by Lys21, Ser22, and Arg26. Lys21 contributes to the phosphoenolpyruvate binding site. Gly91 and Arg119 together coordinate phosphoenolpyruvate. 3-phosphoshikimate is bound by residues Ser164, Gln166, Asp313, and Lys340. Position 166 (Gln166) interacts with phosphoenolpyruvate. Catalysis depends on Asp313, which acts as the Proton acceptor. Phosphoenolpyruvate contacts are provided by Arg344 and Arg386.

The protein belongs to the EPSP synthase family. In terms of assembly, monomer.

Its subcellular location is the cytoplasm. The catalysed reaction is 3-phosphoshikimate + phosphoenolpyruvate = 5-O-(1-carboxyvinyl)-3-phosphoshikimate + phosphate. Its pathway is metabolic intermediate biosynthesis; chorismate biosynthesis; chorismate from D-erythrose 4-phosphate and phosphoenolpyruvate: step 6/7. Catalyzes the transfer of the enolpyruvyl moiety of phosphoenolpyruvate (PEP) to the 5-hydroxyl of shikimate-3-phosphate (S3P) to produce enolpyruvyl shikimate-3-phosphate and inorganic phosphate. This Campylobacter jejuni subsp. doylei (strain ATCC BAA-1458 / RM4099 / 269.97) protein is 3-phosphoshikimate 1-carboxyvinyltransferase.